The chain runs to 340 residues: Glycerol-3-phosphate dehydrogenase [NAD(P)+] (340 aa).

The NADPH site is built by S14, F15, R35, and K108. Sn-glycerol 3-phosphate is bound by residues K108 and G136. An NADPH-binding site is contributed by A140. K191, D244, S254, R255, and N256 together coordinate sn-glycerol 3-phosphate. Residue K191 is the Proton acceptor of the active site. NADPH is bound at residue R255. E281 is an NADPH binding site.

The protein belongs to the NAD-dependent glycerol-3-phosphate dehydrogenase family.

Its subcellular location is the cytoplasm. The catalysed reaction is sn-glycerol 3-phosphate + NAD(+) = dihydroxyacetone phosphate + NADH + H(+). It catalyses the reaction sn-glycerol 3-phosphate + NADP(+) = dihydroxyacetone phosphate + NADPH + H(+). It participates in membrane lipid metabolism; glycerophospholipid metabolism. Catalyzes the reduction of the glycolytic intermediate dihydroxyacetone phosphate (DHAP) to sn-glycerol 3-phosphate (G3P), the key precursor for phospholipid synthesis. The sequence is that of Glycerol-3-phosphate dehydrogenase [NAD(P)+] from Pseudomonas aeruginosa (strain LESB58).